A 307-amino-acid polypeptide reads, in one-letter code: Oxygen-dependent coproporphyrinogen-III oxidase (307 aa).

Residue serine 99 participates in substrate binding. 2 residues coordinate a divalent metal cation: histidine 103 and histidine 113. The active-site Proton donor is histidine 113. Residue 115-117 (NVR) coordinates substrate. Residues histidine 152 and histidine 182 each contribute to the a divalent metal cation site. Positions 247–282 (YVEFNLVFDRGTLFGLQSGGRTESILMSMPPVANWR) are important for dimerization. Substrate is bound at residue 265–267 (GGR).

Belongs to the aerobic coproporphyrinogen-III oxidase family. In terms of assembly, homodimer. Requires a divalent metal cation as cofactor.

It localises to the cytoplasm. The catalysed reaction is coproporphyrinogen III + O2 + 2 H(+) = protoporphyrinogen IX + 2 CO2 + 2 H2O. It participates in porphyrin-containing compound metabolism; protoporphyrin-IX biosynthesis; protoporphyrinogen-IX from coproporphyrinogen-III (O2 route): step 1/1. Functionally, involved in the heme biosynthesis. Catalyzes the aerobic oxidative decarboxylation of propionate groups of rings A and B of coproporphyrinogen-III to yield the vinyl groups in protoporphyrinogen-IX. The protein is Oxygen-dependent coproporphyrinogen-III oxidase of Burkholderia lata (strain ATCC 17760 / DSM 23089 / LMG 22485 / NCIMB 9086 / R18194 / 383).